Consider the following 145-residue polypeptide: MGCGGSRADAIEPRYYESWTRETESTWLTYTDSDAPPSNAAPDSGPEAGGLQAGVLEDGVSANGVPRSTAPGGTSNPEKKMSCGTQCPNPQSLGSGPLTQKQNGLRTTEAKRDAKRTSAKEVTINVTESIRQVDRNQRITKKCIN.

G2 is lipidated: N-myristoyl glycine. C3 is lipidated: S-palmitoyl cysteine. The interval 3 to 35 is interaction with CAMK2A; sequence CGGSRADAIEPRYYESWTRETESTWLTYTDSDA. The segment at 27–120 is disordered; the sequence is WLTYTDSDAP…KRDAKRTSAK (94 aa). Residues 83 to 106 are compositionally biased toward polar residues; it reads CGTQCPNPQSLGSGPLTQKQNGLR. A compositionally biased stretch (basic and acidic residues) spans 108-119; the sequence is TEAKRDAKRTSA.

In terms of assembly, interacts with CAMK2A. Post-translationally, palmitoylation and myristoylation target the protein to the lipid rafts. As to expression, expressed in the brain.

The protein resides in the cytoplasm. The protein localises to the synapse. It localises to the synaptosome. It is found in the membrane raft. Its subcellular location is the postsynaptic density. May play a synaptic role at the postsynaptic lipid rafts possibly through interaction with CAMK2A. This is Brain and acute leukemia cytoplasmic protein (BAALC) from Sus scrofa (Pig).